Reading from the N-terminus, the 156-residue chain is Putative F-box protein R637 (156 aa).

Residues 4–51 (HISSLLNEDCVRHIMCFLTDKEKGKFCLTCRDLLYLIKDVKFNDPVNK) form the F-box domain.

This is Putative F-box protein R637 from Acanthamoeba polyphaga mimivirus (APMV).